Consider the following 62-residue polypeptide: Ferredoxin-1 (62 aa).

4Fe-4S ferredoxin-type domains follow at residues 3-32 (WTVT…LQDG) and 33-62 (KAVP…VEEN). 2 residues coordinate [3Fe-4S] cluster: Cys-12 and Cys-18. Residues Cys-22, Cys-42, Cys-45, and Cys-48 each coordinate [4Fe-4S] cluster. Cys-52 contacts [3Fe-4S] cluster.

In terms of assembly, homodimer. [3Fe-4S] cluster is required as a cofactor. It depends on [4Fe-4S] cluster as a cofactor.

Functionally, ferredoxins are iron-sulfur proteins that transfer electrons in a wide variety of metabolic reactions. This ferredoxin serves as a carrier for pyruvate dehydrogenase. The polypeptide is Ferredoxin-1 (Nitratidesulfovibrio vulgaris (strain DSM 19637 / Miyazaki F) (Desulfovibrio vulgaris)).